Consider the following 210-residue polypeptide: Putative methyltransferase ECU09_1500 (210 aa).

Belongs to the methyltransferase superfamily.

This is Putative methyltransferase ECU09_1500 from Encephalitozoon cuniculi (strain GB-M1) (Microsporidian parasite).